The sequence spans 183 residues: Acireductone dioxygenase (183 aa).

The segment at 1–21 is disordered; that stretch reads MVQAWYMDSDTTTDQREEHQL. Fe(2+) is bound by residues H90, H92, E96, and H135. 4 residues coordinate Ni(2+): H90, H92, E96, and H135.

Belongs to the acireductone dioxygenase (ARD) family. Fe(2+) serves as cofactor. It depends on Ni(2+) as a cofactor.

The protein resides in the cytoplasm. The protein localises to the nucleus. The catalysed reaction is 1,2-dihydroxy-5-(methylsulfanyl)pent-1-en-3-one + O2 = 4-methylsulfanyl-2-oxobutanoate + formate + 2 H(+). The enzyme catalyses 1,2-dihydroxy-5-(methylsulfanyl)pent-1-en-3-one + O2 = 3-(methylsulfanyl)propanoate + CO + formate + 2 H(+). It participates in amino-acid biosynthesis; L-methionine biosynthesis via salvage pathway; L-methionine from S-methyl-5-thio-alpha-D-ribose 1-phosphate: step 5/6. In terms of biological role, catalyzes 2 different reactions between oxygen and the acireductone 1,2-dihydroxy-3-keto-5-methylthiopentene (DHK-MTPene) depending upon the metal bound in the active site. Fe-containing acireductone dioxygenase (Fe-ARD) produces formate and 2-keto-4-methylthiobutyrate (KMTB), the alpha-ketoacid precursor of methionine in the methionine recycle pathway. Ni-containing acireductone dioxygenase (Ni-ARD) produces methylthiopropionate, carbon monoxide and formate, and does not lie on the methionine recycle pathway. This chain is Acireductone dioxygenase, found in Ixodes scapularis (Black-legged tick).